The chain runs to 554 residues: Phosphomannomutase (554 aa).

Catalysis depends on Ser149, which acts as the Phosphoserine intermediate. Mg(2+)-binding residues include Ser149, Asp301, Asp303, and Asp305.

Belongs to the phosphohexose mutase family. Mg(2+) is required as a cofactor.

It catalyses the reaction alpha-D-mannose 1-phosphate = D-mannose 6-phosphate. In Mycoplasma pneumoniae (strain ATCC 29342 / M129 / Subtype 1) (Mycoplasmoides pneumoniae), this protein is Phosphomannomutase (manB).